A 165-amino-acid chain; its full sequence is Pro-MCH (165 aa).

Residues 1–21 (MAKMTLSSYMLMLAFSLFSQG) form the signal peptide. The tract at residues 66–89 (YKNDESGFMNDDDNKNSKNTGSKQ) is disordered. Ile-143 carries the post-translational modification Isoleucine amide. A disulfide bond links Cys-153 and Cys-162.

Belongs to the MCH family. Pro-MCH is processed differentially in the brain and in peripheral organs producing two neuropeptides; NEI and MCH. A third peptide, NGE, may also be produced. Preferential processing in neurons by prohormone convertase 2 (PC2) generates NEI. MCH is generated in neurons of the lateral hypothalmic area by several prohormone convertases including PC1/3, PC2 and PC5/6. As to expression, predominantly expressed in hypothalamus. Also found in heart, intestine, spleen and testis (spermatogonia, early spermatocytes and Sertoli cells). In brain only mature MCH and NEI peptides are present. In peripheral tissues a large product, encompassing the NEI and MCH domains of the precursor, is found predominantly.

It is found in the secreted. Its function is as follows. MCH may act as a neurotransmitter or neuromodulator in a broad array of neuronal functions directed toward the regulation of goal-directed behavior, such as food intake, and general arousal. This chain is Pro-MCH (Pmch), found in Mus musculus (Mouse).